The chain runs to 274 residues: Large ribosomal subunit protein uL2cy (274 aa).

2 disordered regions span residues 1 to 25 (MAIHLYKTSTPSTRNGTVDSQVKSN) and 223 to 274 (MNPV…RRSK). Residues 7–25 (KTSTPSTRNGTVDSQVKSN) are compositionally biased toward polar residues.

This sequence belongs to the universal ribosomal protein uL2 family. As to quaternary structure, part of the 50S ribosomal subunit.

The protein resides in the plastid. Its subcellular location is the chloroplast. This Atropa belladonna (Belladonna) protein is Large ribosomal subunit protein uL2cy (rpl2-B).